We begin with the raw amino-acid sequence, 306 residues long: MKIVFGIVSSQDLLIKINFPILINQLRNKKITWKNETWVDSGGYQIALYNLKISVKDVLEKYKTYNAYAFFSLDIPSIFSPLDRKNFEYFEYLYTKMEYIERIIPVIHLYPTREVDEAIDFYSQYTDYIAFGGIIASSKLKILIYTFPWYYYIRKYVKRLHVLGMSAPYFLQIFDTANSMDTTTYTKTASYREIFWFDGTRRYVGDRKERTLTKEEEEKLFEFLDKTNFPFEYDFSNVKILKTMNAWILKYNNWNIKNKYTIYAEKLRKMGLDSLVTEIIQNYKIANELKKEKQQNKKKNSIELEE.

Residues 277–306 (TEIIQNYKIANELKKEKQQNKKKNSIELEE) are a coiled coil.

This is an uncharacterized protein from Saccharolobus islandicus (Sulfolobus islandicus).